We begin with the raw amino-acid sequence, 644 residues long: Protein cueball (644 aa).

The N-terminal stretch at 1–26 (MIRIRFGMDVLLVLLLATCLLSPTHG) is a signal peptide. Residues 27–531 (TPLEWDFAVT…VCLTPTVWTS (505 aa)) are Extracellular-facing. N-linked (GlcNAc...) asparagine glycosylation is found at Asn82 and Asn108. 3 LDL-receptor class B repeats span residues 121–166 (TNLF…DVCR), 167–211 (RKLY…DQLS), and 212–257 (DRLF…TNDA). Asn175 and Asn190 each carry an N-linked (GlcNAc...) asparagine glycan. N-linked (GlcNAc...) asparagine glycosylation occurs at Asn313. 2 EGF-like domains span residues 398–430 (EIRE…FTGE) and 433–471 (EVSV…ARCE). 5 cysteine pairs are disulfide-bonded: Cys402-Cys411, Cys406-Cys421, Cys437-Cys447, Cys441-Cys459, and Cys461-Cys470. N-linked (GlcNAc...) asparagine glycans are attached at residues Asn473 and Asn508. A helical transmembrane segment spans residues 532-552 (SVIIILVVGIVSSLLLVAVIV). The Cytoplasmic portion of the chain corresponds to 553 to 644 (HGIRRLYKPK…LIHNMEDDLY (92 aa)).

Belongs to the cueball family.

The protein resides in the cell membrane. Has a role in spermatogenesis and oogenesis. This Drosophila yakuba (Fruit fly) protein is Protein cueball.